The primary structure comprises 607 residues: Elongation factor 4 (607 aa).

The 183-residue stretch at 11-193 (SKIRNFSIIA…QIVEKVPAPT (183 aa)) folds into the tr-type G domain. Residues 23–28 (DHGKST) and 140–143 (NKID) contribute to the GTP site.

This sequence belongs to the TRAFAC class translation factor GTPase superfamily. Classic translation factor GTPase family. LepA subfamily.

The protein resides in the cell membrane. It carries out the reaction GTP + H2O = GDP + phosphate + H(+). Its function is as follows. Required for accurate and efficient protein synthesis under certain stress conditions. May act as a fidelity factor of the translation reaction, by catalyzing a one-codon backward translocation of tRNAs on improperly translocated ribosomes. Back-translocation proceeds from a post-translocation (POST) complex to a pre-translocation (PRE) complex, thus giving elongation factor G a second chance to translocate the tRNAs correctly. Binds to ribosomes in a GTP-dependent manner. The sequence is that of Elongation factor 4 from Bacillus cereus (strain ZK / E33L).